Here is a 455-residue protein sequence, read N- to C-terminus: Bifunctional protein GlmU (455 aa).

Positions 1–228 are pyrophosphorylase; sequence MTQPLHVIIL…AQEAEGANDP (228 aa). Residues 10–13, K24, Q76, 81–82, 103–105, G138, E153, N168, and N226 each bind UDP-N-acetyl-alpha-D-glucosamine; these read LAAG, GT, and YGD. A Mg(2+)-binding site is contributed by D105. N226 contacts Mg(2+). Residues 229–249 form a linker region; the sequence is WQLSQLERAWQRRAVRALCAQ. The interval 250-455 is N-acetyltransferase; sequence GARVRDPARL…DGWKRPLKKS (206 aa). The UDP-N-acetyl-alpha-D-glucosamine site is built by R332 and K350. Residue H362 is the Proton acceptor of the active site. Y365 and N376 together coordinate UDP-N-acetyl-alpha-D-glucosamine. Acetyl-CoA is bound by residues A379, 385-386, S404, A422, and R439; that span reads NY.

It in the N-terminal section; belongs to the N-acetylglucosamine-1-phosphate uridyltransferase family. The protein in the C-terminal section; belongs to the transferase hexapeptide repeat family. As to quaternary structure, homotrimer. The cofactor is Mg(2+).

It is found in the cytoplasm. The catalysed reaction is alpha-D-glucosamine 1-phosphate + acetyl-CoA = N-acetyl-alpha-D-glucosamine 1-phosphate + CoA + H(+). It carries out the reaction N-acetyl-alpha-D-glucosamine 1-phosphate + UTP + H(+) = UDP-N-acetyl-alpha-D-glucosamine + diphosphate. It functions in the pathway nucleotide-sugar biosynthesis; UDP-N-acetyl-alpha-D-glucosamine biosynthesis; N-acetyl-alpha-D-glucosamine 1-phosphate from alpha-D-glucosamine 6-phosphate (route II): step 2/2. It participates in nucleotide-sugar biosynthesis; UDP-N-acetyl-alpha-D-glucosamine biosynthesis; UDP-N-acetyl-alpha-D-glucosamine from N-acetyl-alpha-D-glucosamine 1-phosphate: step 1/1. Its pathway is bacterial outer membrane biogenesis; LPS lipid A biosynthesis. Functionally, catalyzes the last two sequential reactions in the de novo biosynthetic pathway for UDP-N-acetylglucosamine (UDP-GlcNAc). The C-terminal domain catalyzes the transfer of acetyl group from acetyl coenzyme A to glucosamine-1-phosphate (GlcN-1-P) to produce N-acetylglucosamine-1-phosphate (GlcNAc-1-P), which is converted into UDP-GlcNAc by the transfer of uridine 5-monophosphate (from uridine 5-triphosphate), a reaction catalyzed by the N-terminal domain. This chain is Bifunctional protein GlmU, found in Stenotrophomonas maltophilia (strain K279a).